Here is a 456-residue protein sequence, read N- to C-terminus: PTS system sucrose-specific EIIBC component (456 aa).

The 84-residue stretch at 4–87 (EQISCSLLPL…TQAAGISESS (84 aa)) folds into the PTS EIIB type-1 domain. The Phosphocysteine intermediate; for EIIB activity role is filled by cysteine 26. The 350-residue stretch at 107-456 (RLLSNIFVPI…LVLKYKTDAE (350 aa)) folds into the PTS EIIC type-1 domain. Helical transmembrane passes span 112 to 132 (IFVP…LLGM), 144 to 164 (AIYI…PILI), 181 to 201 (TLGG…AAGF), 213 to 233 (MIGY…MSIV), 247 to 267 (LILT…LIIG), 288 to 308 (AGWL…ITGI), 329 to 349 (FLLP…LAVW), 360 to 380 (ITLP…IFGI), 388 to 408 (FIAA…VHVY), and 428 to 448 (LLNY…VSLV).

Its subcellular location is the cell inner membrane. The enzyme catalyses N(pros)-phospho-L-histidyl-[protein](out) + sucrose = sucrose 6(G)-phosphate(in) + L-histidyl-[protein]. Functionally, the phosphoenolpyruvate-dependent sugar phosphotransferase system (sugar PTS), a major carbohydrate active transport system, catalyzes the phosphorylation of incoming sugar substrates concomitantly with their translocation across the cell membrane. This system is involved in sucrose transport. This chain is PTS system sucrose-specific EIIBC component, found in Salmonella typhimurium.